Here is a 296-residue protein sequence, read N- to C-terminus: Putative thiosulfate sulfurtransferase SseA (296 aa).

Rhodanese domains are found at residues 31–138 (GKPG…DTSL) and 168–286 (ILGT…VPIT). Cys-245 serves as the catalytic Cysteine persulfide intermediate. Arg-250 is a binding site for substrate.

The enzyme catalyses thiosulfate + hydrogen cyanide = thiocyanate + sulfite + 2 H(+). The polypeptide is Putative thiosulfate sulfurtransferase SseA (sseA) (Mycobacterium leprae (strain TN)).